A 166-amino-acid chain; its full sequence is Large ribosomal subunit protein uL10 (166 aa).

This sequence belongs to the universal ribosomal protein uL10 family. Part of the ribosomal stalk of the 50S ribosomal subunit. The N-terminus interacts with L11 and the large rRNA to form the base of the stalk. The C-terminus forms an elongated spine to which L12 dimers bind in a sequential fashion forming a multimeric L10(L12)X complex.

Forms part of the ribosomal stalk, playing a central role in the interaction of the ribosome with GTP-bound translation factors. In Shouchella clausii (strain KSM-K16) (Alkalihalobacillus clausii), this protein is Large ribosomal subunit protein uL10.